A 171-amino-acid polypeptide reads, in one-letter code: Lipoprotein signal peptidase (171 aa).

3 consecutive transmembrane segments (helical) span residues 8-28 (SFLW…YIVV), 64-84 (WQQY…VYFL), and 96-118 (SAYA…NGFV). Active-site residues include Asp-120 and Asp-138. A helical membrane pass occupies residues 133 to 153 (VFNIADIAICIGAGLLALDAF).

The protein belongs to the peptidase A8 family.

It localises to the cell inner membrane. It catalyses the reaction Release of signal peptides from bacterial membrane prolipoproteins. Hydrolyzes -Xaa-Yaa-Zaa-|-(S,diacylglyceryl)Cys-, in which Xaa is hydrophobic (preferably Leu), and Yaa (Ala or Ser) and Zaa (Gly or Ala) have small, neutral side chains.. It participates in protein modification; lipoprotein biosynthesis (signal peptide cleavage). In terms of biological role, this protein specifically catalyzes the removal of signal peptides from prolipoproteins. This Haemophilus influenzae (strain 86-028NP) protein is Lipoprotein signal peptidase.